A 1102-amino-acid polypeptide reads, in one-letter code: DNA-directed RNA polymerase subunit beta (1102 aa).

Residues 1081–1102 (LPGKRTPSRPIYESLSTEGNQD) form a disordered region.

The protein belongs to the RNA polymerase beta chain family. In cyanobacteria the RNAP catalytic core is composed of 2 alpha, 1 beta, 1 beta', 1 gamma and 1 omega subunit. When a sigma factor is associated with the core the holoenzyme is formed, which can initiate transcription.

It catalyses the reaction RNA(n) + a ribonucleoside 5'-triphosphate = RNA(n+1) + diphosphate. Functionally, DNA-dependent RNA polymerase catalyzes the transcription of DNA into RNA using the four ribonucleoside triphosphates as substrates. This Trichodesmium erythraeum (strain IMS101) protein is DNA-directed RNA polymerase subunit beta.